We begin with the raw amino-acid sequence, 219 residues long: Cytidylate kinase (219 aa).

10-18 (GPAAAGKST) serves as a coordination point for ATP.

This sequence belongs to the cytidylate kinase family. Type 1 subfamily.

It localises to the cytoplasm. The catalysed reaction is CMP + ATP = CDP + ADP. The enzyme catalyses dCMP + ATP = dCDP + ADP. This chain is Cytidylate kinase, found in Staphylococcus saprophyticus subsp. saprophyticus (strain ATCC 15305 / DSM 20229 / NCIMB 8711 / NCTC 7292 / S-41).